Reading from the N-terminus, the 214-residue chain is Leucyl/phenylalanyl-tRNA--protein transferase (214 aa).

Belongs to the L/F-transferase family.

The protein resides in the cytoplasm. It catalyses the reaction N-terminal L-lysyl-[protein] + L-leucyl-tRNA(Leu) = N-terminal L-leucyl-L-lysyl-[protein] + tRNA(Leu) + H(+). The catalysed reaction is N-terminal L-arginyl-[protein] + L-leucyl-tRNA(Leu) = N-terminal L-leucyl-L-arginyl-[protein] + tRNA(Leu) + H(+). It carries out the reaction L-phenylalanyl-tRNA(Phe) + an N-terminal L-alpha-aminoacyl-[protein] = an N-terminal L-phenylalanyl-L-alpha-aminoacyl-[protein] + tRNA(Phe). Its function is as follows. Functions in the N-end rule pathway of protein degradation where it conjugates Leu, Phe and, less efficiently, Met from aminoacyl-tRNAs to the N-termini of proteins containing an N-terminal arginine or lysine. This chain is Leucyl/phenylalanyl-tRNA--protein transferase, found in Cereibacter sphaeroides (strain ATCC 17023 / DSM 158 / JCM 6121 / CCUG 31486 / LMG 2827 / NBRC 12203 / NCIMB 8253 / ATH 2.4.1.) (Rhodobacter sphaeroides).